The sequence spans 292 residues: Cyclin-dependent kinase 5 (292 aa).

In terms of domain architecture, Protein kinase spans 4–286 (YEKLEKIGEG…AEEALQHPYF (283 aa)). ATP is bound by residues 10–18 (IGEGTYGTV) and lysine 33. At tyrosine 15 the chain carries Phosphotyrosine; by ABL1, EPHA4 and FYN. The residue at position 17 (threonine 17) is a Phosphothreonine. At lysine 56 the chain carries N6-acetyllysine. Residue serine 72 is modified to Phosphoserine. Catalysis depends on aspartate 126, which acts as the Proton acceptor. Serine 159 carries the post-translational modification Phosphoserine.

This sequence belongs to the protein kinase superfamily. CMGC Ser/Thr protein kinase family. CDC2/CDKX subfamily. Heterodimer composed of a catalytic subunit CDK5 and a regulatory subunit CDK5R1 (p25) and macromolecular complex composed of at least CDK5, CDK5R1 (p35) and CDK5RAP1 or CDK5RAP2 or CDK5RAP3. Only the heterodimer shows kinase activity. Under neurotoxic stress and neuronal injury conditions, p35 is cleaved by calpain to generate p25 that hyperactivates CDK5, that becomes functionally disabled and often toxic. Found in a trimolecular complex with CABLES1 and ABL1. Interacts with CABLES1 and CABLES2. Interacts with AATK and GSTP1. Binds to HDAC1 when in complex with p25. Interaction with myristoylation p35 promotes CDK5 association with membranes. Both isoforms 1 and 2 interacts with beta-catenin/CTNNB1. Interacts with delta-catenin/CTNND2 and APEX1. Interacts with P53/TP53 in neurons. Interacts with PTK2/FAK1. Interacts with EPHA4; may mediate the activation of NGEF by EPHA4. The complex p35/CDK5 interacts with CLOCK. Interacts with HTR6. Phosphorylation on Tyr-15 by ABL1 and FYN, and on Ser-159 by casein kinase 1 promotes kinase activity. By contrast, phosphorylation at Thr-14 inhibits activity. In terms of processing, phosphorylation at Ser-159 is essential for maximal catalytic activity. In terms of tissue distribution, expressed in hippocampal neuronal synaptic termini (at protein level). Expressed predominantly in post-mitotic neurons of the central and peripheral nervous system.

It localises to the cytoplasm. It is found in the nucleus. The protein localises to the cell membrane. The protein resides in the perikaryon. Its subcellular location is the cell projection. It localises to the lamellipodium. It is found in the growth cone. The protein localises to the postsynaptic density. The protein resides in the synapse. It catalyses the reaction L-seryl-[protein] + ATP = O-phospho-L-seryl-[protein] + ADP + H(+). The catalysed reaction is L-threonyl-[protein] + ATP = O-phospho-L-threonyl-[protein] + ADP + H(+). Inhibited by 2-(1-ethyl-2-hydroxyethylamino)-6-benzylamino-9-isopropylpurine (roscovitine), 1-isopropyl-4-aminobenzyl-6-ether-linked benzimidazoles, resveratrol, AT-7519 and olomoucine. Activated by CDK5R1 (p35) and CDK5R2 (p39) during the development of the nervous system; degradation of CDK5R1 (p35) and CDK5R2 (p39) by proteasome result in down regulation of kinase activity, during this process, CDK5 phosphorylates p35 and induces its ubiquitination and subsequent degradation. Kinase activity is mainly determined by the amount of p35 available and subcellular location; reversible association to plasma membrane inhibits activity. Long-term inactivation as well as CDK5R1 (p25)-mediated hyperactivation of CDK5 triggers cell death. The pro-death activity of hyperactivated CDK5 is suppressed by membrane association of CDK5, via myristoylation of p35. Brain-derived neurotrophic factor, glial-derived neurotrophic factor, nerve growth factor (NGF), retinoic acid, laminin and neuregulin promote activity. Neurotoxicity enhances nuclear activity, thus leading to MEF2 phosphorylation and inhibition prior to apoptosis of cortical neurons. Repression by GSTP1 via p25/p35 translocation prevents neurodegeneration. Functionally, proline-directed serine/threonine-protein kinase essential for neuronal cell cycle arrest and differentiation and may be involved in apoptotic cell death in neuronal diseases by triggering abortive cell cycle re-entry. Interacts with D1 and D3-type G1 cyclins. Phosphorylates SRC, NOS3, VIM/vimentin, p35/CDK5R1, MEF2A, SIPA1L1, SH3GLB1, PXN, PAK1, MCAM/MUC18, SEPT5, SYN1, DNM1, AMPH, SYNJ1, CDK16, RAC1, RHOA, CDC42, TONEBP/NFAT5, MAPT/TAU, MAP1B, histone H1, p53/TP53, HDAC1, APEX1, PTK2/FAK1, huntingtin/HTT, ATM, MAP2, NEFH and NEFM. Regulates several neuronal development and physiological processes including neuronal survival, migration and differentiation, axonal and neurite growth, synaptogenesis, oligodendrocyte differentiation, synaptic plasticity and neurotransmission, by phosphorylating key proteins. Negatively regulates the CACNA1B/CAV2.2 -mediated Ca(2+) release probability at hippocampal neuronal soma and synaptic terminals. Activated by interaction with CDK5R1 (p35) and CDK5R2 (p39), especially in postmitotic neurons, and promotes CDK5R1 (p35) expression in an autostimulation loop. Phosphorylates many downstream substrates such as Rho and Ras family small GTPases (e.g. PAK1, RAC1, RHOA, CDC42) or microtubule-binding proteins (e.g. MAPT/TAU, MAP2, MAP1B), and modulates actin dynamics to regulate neurite growth and/or spine morphogenesis. Also phosphorylates exocytosis associated proteins such as MCAM/MUC18, SEPT5, SYN1, and CDK16/PCTAIRE1 as well as endocytosis associated proteins such as DNM1, AMPH and SYNJ1 at synaptic terminals. In the mature central nervous system (CNS), regulates neurotransmitter movements by phosphorylating substrates associated with neurotransmitter release and synapse plasticity; synaptic vesicle exocytosis, vesicles fusion with the presynaptic membrane, and endocytosis. Promotes cell survival by activating anti-apoptotic proteins BCL2 and STAT3, and negatively regulating of JNK3/MAPK10 activity. Phosphorylation of p53/TP53 in response to genotoxic and oxidative stresses enhances its stabilization by preventing ubiquitin ligase-mediated proteasomal degradation, and induces transactivation of p53/TP53 target genes, thus regulating apoptosis. Phosphorylation of p35/CDK5R1 enhances its stabilization by preventing calpain-mediated proteolysis producing p25/CDK5R1 and avoiding ubiquitin ligase-mediated proteasomal degradation. During aberrant cell-cycle activity and DNA damage, p25/CDK5 activity elicits cell-cycle activity and double-strand DNA breaks that precedes neuronal death by deregulating HDAC1. DNA damage triggered phosphorylation of huntingtin/HTT in nuclei of neurons protects neurons against polyglutamine expansion as well as DNA damage mediated toxicity. Phosphorylation of PXN reduces its interaction with PTK2/FAK1 in matrix-cell focal adhesions (MCFA) during oligodendrocytes (OLs) differentiation. Negative regulator of Wnt/beta-catenin signaling pathway. Activator of the GAIT (IFN-gamma-activated inhibitor of translation) pathway, which suppresses expression of a post-transcriptional regulon of proinflammatory genes in myeloid cells; phosphorylates the linker domain of glutamyl-prolyl tRNA synthetase (EPRS) in a IFN-gamma-dependent manner, the initial event in assembly of the GAIT complex. Phosphorylation of SH3GLB1 is required for autophagy induction in starved neurons. Phosphorylation of TONEBP/NFAT5 in response to osmotic stress mediates its rapid nuclear localization. MEF2 is inactivated by phosphorylation in nucleus in response to neurotoxin, thus leading to neuronal apoptosis. APEX1 AP-endodeoxyribonuclease is repressed by phosphorylation, resulting in accumulation of DNA damage and contributing to neuronal death. NOS3 phosphorylation down regulates NOS3-derived nitrite (NO) levels. SRC phosphorylation mediates its ubiquitin-dependent degradation and thus leads to cytoskeletal reorganization. May regulate endothelial cell migration and angiogenesis via the modulation of lamellipodia formation. Involved in dendritic spine morphogenesis by mediating the EFNA1-EPHA4 signaling. The complex p35/CDK5 participates in the regulation of the circadian clock by modulating the function of CLOCK protein: phosphorylates CLOCK at 'Thr-451' and 'Thr-461' and regulates the transcriptional activity of the CLOCK-BMAL1 heterodimer in association with altered stability and subcellular distribution. The chain is Cyclin-dependent kinase 5 from Rattus norvegicus (Rat).